The chain runs to 165 residues: MELILLFFFLMALLVSLSSSSSISDGVFESQTSVSGRNLRHAKKKCEVNFEYMDYKVLTKRCKGPAFPAKECCSAFKEFACPYVSQINDMNSDCAQTMFSYMNIYGNYPTGLFANECRERKDGLVCPLPPLYSHNLNASTADSTPRFISLLISAATAVFALLVLT.

A signal peptide spans 1 to 20 (MELILLFFFLMALLVSLSSS). A required for its function in pollen tube reception region spans residues 82–93 (PYVSQINDMNSD). Asparagine 137 carries N-linked (GlcNAc...) asparagine glycosylation. Residue serine 139 is the site of GPI-anchor amidated serine attachment. The propeptide at 140 to 165 (TADSTPRFISLLISAATAVFALLVLT) is removed in mature form.

Interacts with FER. As to expression, expressed in leaves, buds, flowers and stems. Highest expression in the synergid cells of the female gametophyte.

The protein localises to the cell membrane. In terms of biological role, female gametophyte-specific component of the signaling pathway required for fertilization. Required for reception of the pollen tube by the female gametophyte. Acts specifically at the synergid cell surface for pollen tube reception. Plays a role in double fertilization and early seed development. Component of the FER-regulated Rho GTPase signaling complex. Acts as a chaperone and coreceptor for FER. Required for localization of FER to the plasma membrane. This is GPI-anchored protein LORELEI (LRE) from Arabidopsis thaliana (Mouse-ear cress).